The following is a 985-amino-acid chain: UPF0182 protein cgR_0895 (985 aa).

Transmembrane regions (helical) follow at residues 19–39, 63–83, 115–135, 176–196, 215–235, 262–282, and 290–310; these read VTWIFAIIALIILIAPMSVGF, IVLFVIFALIAGFVTWLAGYF, VMVLIPIFVALLAGLIGQRSW, SMMLIVAFLIALVGHYLMGGI, TQLAVTAGLWMLVKVAGYWLD, KIILLVIALFVAIAFFSAIFL, and LAVVLMLLSSVIIGAAWPLML. Positions 906–944 are disordered; the sequence is AQDIEEVDGTTTTPSTDETDTDTDQPATETPTAPVSEAE. Residues 929-939 are compositionally biased toward low complexity; the sequence is DQPATETPTAP.

The protein belongs to the UPF0182 family.

The protein localises to the cell membrane. The polypeptide is UPF0182 protein cgR_0895 (Corynebacterium glutamicum (strain R)).